A 405-amino-acid chain; its full sequence is Dynactin subunit 2 (405 aa).

The segment at 1–24 (MADPKYADLPGIARNEPDVYETSD) is disordered. A coiled-coil region spans residues 101 to 134 (PQQKYQRLLHEIQELTQEVEKAQSTVKESAAEEK). Residues 186–207 (AKTRKNPEGKSPAKGPGPDNEN) are disordered. Residues 383–403 (KENLATVEDNFTSIDARIKKL) are a coiled coil.

This sequence belongs to the dynactin subunit 2 family. Subunit of dynactin, a multiprotein complex part of a tripartite complex with dynein and a adapter, such as BICDL1, BICD2 or HOOK3. The dynactin complex is built around ACTR1A/ACTB filament and consists of an actin-related filament composed of a shoulder domain, a pointed end and a barbed end. Its length is defined by its flexible shoulder domain. The soulder is composed of 2 DCTN1 subunits, 4 DCTN2 and 2 DCTN3.

It localises to the cytoplasm. The protein localises to the cytoskeleton. Its subcellular location is the microtubule organizing center. The protein resides in the centrosome. It is found in the membrane. In terms of biological role, part of the dynactin complex that activates the molecular motor dynein for ultra-processive transport along microtubules. In the dynactin soulder domain, binds the ACTR1A filament and acts as a molecular ruler to determine the length. Modulates cytoplasmic dynein binding to an organelle, and plays a role in prometaphase chromosome alignment and spindle organization during mitosis. Involved in anchoring microtubules to centrosomes. This Xenopus tropicalis (Western clawed frog) protein is Dynactin subunit 2 (dctn2).